The following is a 714-amino-acid chain: MPVRFKGLSEYQRNFLWKKSYLSESCNSSVGRKYPWAGLRSDQLGITKEPSFISKRRVPYHDPQISKSLEWNGAISESNVVASPEPEAPETPKSQEAEQKDVTQERVHSLEASRVPKRTRSHSADSRAEGASDVENNEGVTNHTPVNENVELEHSTKVLSENVDNGLDRLLRKKAGLTVVPSYNALRNSEYQRQFVWKTSKETAPAFAANQVFHNKSQFVPPFKGNSVIHETEYKRNFKGLSPVKEPKLRNDLRENRNLETVSPERKSNKIDDRLKLEAEMELKDLHQPKRKLTPWKHQRLGKVNSEYRAKFLSPAQYLYKAGAWTHVKGNMPNQVKELREKAEFYRKRVQGTHFSRDHLNQILSDSNCCWDVSSTTSSEGTVSSNIRALDLAGDPTSHKTLQKCPSTEPEEKGNIVEEQPQKNTTEKLGVSAPTIPVRRRLAWDTENTSEDVQKQPGEKEEEDDNEEEGDRKTGKQAFMGEQEKLDVREKSKADKMKEGSDSSVSSEKGGRLPTPKLRELGGIQRTHHDLTTPAVGGAVLVSPSKMKPPAPEQRKRMTSQDCLETSKNDFTKKESRAVSLLTSPAAGIKTVDPLPLREDSEDNIHKFAEATLPVSKIPKYPTNPPGQLPSPPHVPSYWHPSRRIQGSLRDPEFQHNVGKARMNNLQLPQHEAFNDEDEDRLSEISARSAASSLRAFQTLARAKKRKENFWGKT.

Positions 9–15 (SEYQRNF) match the ST]-E-Y-X(3)-F motif 1; required for efficient microtubule binding and stabilization motif. A disordered region spans residues 79 to 152 (NVVASPEPEA…HTPVNENVEL (74 aa)). A Phosphoserine modification is found at serine 83. The span at 93-111 (KSQEAEQKDVTQERVHSLE) shows a compositional bias: basic and acidic residues. Serine 123 and serine 126 each carry phosphoserine. Positions 138–147 (EGVTNHTPVN) are enriched in polar residues. An ST]-E-Y-X(3)-F motif 2; required for efficient microtubule binding and stabilization motif is present at residues 189 to 195 (SEYQRQF). The short motif at 232–238 (TEYKRNF) is the ST]-E-Y-X(3)-F motif 3; required for efficient microtubule binding and stabilization element. Phosphoserine occurs at positions 242 and 263. Residues 306 to 312 (SEYRAKF) carry the ST]-E-Y-X(3)-F motif 4; required for efficient microtubule binding and stabilization motif. The residue at position 314 (serine 314) is a Phosphoserine. The segment at 391–571 (DLAGDPTSHK…DCLETSKNDF (181 aa)) is disordered. The segment covering 460–469 (KEEEDDNEEE) has biased composition (acidic residues). The span at 482–501 (EQEKLDVREKSKADKMKEGS) shows a compositional bias: basic and acidic residues. Phosphoserine is present on residues serine 560 and serine 584. The segment at 616–637 (SKIPKYPTNPPGQLPSPPHVPS) is disordered. The span at 622 to 635 (PTNPPGQLPSPPHV) shows a compositional bias: pro residues. Residue serine 648 is modified to Phosphoserine.

It belongs to the MDM1 family.

The protein resides in the nucleus. The protein localises to the cytoplasm. It is found in the cytoskeleton. It localises to the microtubule organizing center. Its subcellular location is the centrosome. The protein resides in the centriole. In terms of biological role, microtubule-binding protein that negatively regulates centriole duplication. Binds to and stabilizes microtubules. This Homo sapiens (Human) protein is Nuclear protein MDM1 (MDM1).